Consider the following 398-residue polypeptide: MLTKSVTSILQGITLAAKEFENNEAGARESLIAHSRALISALEVPSEFIQHTFWSQPALSAIIRLAADVNMFQHLKDAAGKGIDCEALSMKTGVDASLLSRLARHLVAMNVITFQNGAFHGTDLSDSLAAENYQHSIRFCHDVSRPSFNEFPEFFKSNGYKTPTLSGTDGPFQAAHKTELTFLQWLVNTHPYLQYFHSYMSVYRAGKQNWCDTGFYPVSERLLSGFDASVSDVVLVDVGGGRGHDLETFASKFSPLPGRLVLQDREQTIASMPADESRQFEATAHNIFTPQPVKYARAYYMHSVPHGFGDEDAIKIMANLVPALAKGYSRVLLNEIVVSEENPILAATNMDMIMLAHLAVKERTEAEWRYIFTQAGLKVVNIYSYPGVAESLIEAELA.

Aspartate 264 contributes to the S-adenosyl-L-methionine binding site. The Proton acceptor role is filled by histidine 306. Active-site residues include glutamate 335 and glutamate 362.

It belongs to the class I-like SAM-binding methyltransferase superfamily. Cation-independent O-methyltransferase family. COMT subfamily.

It localises to the cytoplasm. The protein localises to the cytosol. The enzyme catalyses (4E,8E)-10-(4,6-dihydroxy-7-methyl-3-oxo-1,3-dihydro-2-benzofuran-5-yl)-4,8-dimethyldeca-4,8-dienoate + S-adenosyl-L-methionine = (4E,8E)-10-(4-hydroxy-6-methoxy-7-methyl-3-oxo-1,3-dihydro-2-benzofuran-5-yl)-4,8-dimethyldeca-4,8-dienoate + S-adenosyl-L-homocysteine + H(+). The protein operates within secondary metabolite biosynthesis; terpenoid biosynthesis. In terms of biological role, O-methyltransferase; part of the gene cluster that mediates the biosynthesis of mycophenolic acid (MPA), the first isolated antibiotic natural product in the world obtained from a culture of Penicillium brevicompactum in 1893. MpaC methylates farnesyl-DHMP-3C (FDHMP-3C) to yield MFDHMP-3C. The first step of the pathway is the synthesis of 5-methylorsellinic acid (5MOA) by the cytosolic polyketide synthase mpaC. 5MOA is then converted to the phthalide compound 5,7-dihydroxy-4,6-dimethylphthalide (DHMP) by the endoplasmic reticulum-bound cytochrome P450 monooxygenase mpaDE. MpaDE first catalyzes hydroxylation of 5-MOA to 4,6-dihydroxy-2-(hydroxymethyl)-3-methylbenzoic acid (DHMB). MpaDE then acts as a lactone synthase that catalyzes the ring closure to convert DHMB into DHMP. The next step is the prenylation of DHMP by the Golgi apparatus-associated prenyltransferase mpaA to yield farnesyl-DHMP (FDHMP). The ER-bound oxygenase mpaB then mediates the oxidative cleavage the C19-C20 double bond in FDHMP to yield FDHMP-3C via a mycophenolic aldehyde intermediate. The O-methyltransferase mpaG catalyzes the methylation of FDHMP-3C to yield MFDHMP-3C. After the cytosolic methylation of FDHMP-3C, MFDHMP-3C enters into peroxisomes probably via free diffusion due to its low molecular weight. Upon a peroxisomal CoA ligation reaction, catalyzed by a beta-oxidation component enzyme acyl-CoA ligase ACL891, MFDHMP-3C-CoA would then be restricted to peroxisomes for the following beta-oxidation pathway steps. The peroxisomal beta-oxidation machinery than converts MFDHMP-3C-CoA into MPA_CoA, via a beta-oxidation chain-shortening process. Finally mpaH acts as a peroxisomal acyl-CoA hydrolase with high substrate specificity toward MPA-CoA to release the final product MPA. This Penicillium roqueforti (strain FM164) protein is O-methyltransferase mpaG.